Reading from the N-terminus, the 80-residue chain is UPF0154 protein SZO_03240 (80 aa).

The chain crosses the membrane as a helical span at residues 4–24 (AIWILLIIVALTAGLFGGIFI).

This sequence belongs to the UPF0154 family.

The protein localises to the cell membrane. This Streptococcus equi subsp. zooepidemicus (strain H70) protein is UPF0154 protein SZO_03240.